A 305-amino-acid chain; its full sequence is Cytochrome c biogenesis protein CcsA (305 aa).

The next 8 helical transmembrane spans lie at 11–31 (GLGFGAFLLLLLALPLAFWAV), 37–57 (TGIVQLLVALANLLLTSQLVL), 63–83 (GHFPISNLYESLCFLAWACTL), 96–116 (IVAAAATPMGLGCIAFASFAL), 141–161 (VIMVSYAALLVGSLLSLAVLL), 212–232 (TITVGFLMLTVGIVSGAVWAN), 246–263 (TWALICWLVYAAYLHTRL), and 275–295 (VAVVGLVVIAVCYIGVNLLGI).

It belongs to the CcmF/CycK/Ccl1/NrfE/CcsA family. In terms of assembly, may interact with ccs1.

It is found in the cellular thylakoid membrane. Required during biogenesis of c-type cytochromes (cytochrome c6 and cytochrome f) at the step of heme attachment. The sequence is that of Cytochrome c biogenesis protein CcsA from Parasynechococcus marenigrum (strain WH8102).